Consider the following 673-residue polypeptide: uncharacterized protein (673 aa).

The signal sequence occupies residues 1 to 24; sequence MKIHNIIKIIIVVCLEGFALTSFA. 6 helical membrane passes run 224–244, 253–273, 410–430, 436–456, 469–489, and 562–582; these read NAIG…MVLN, IALF…LGPL, IILI…LYFI, CMIT…MMLF, VSLS…LLIT, and VVSI…FYYF. The segment at 624–673 is disordered; that stretch reads AQATQGKPPSSGDMPGDGGSKRSEGQKGDDSFISSGGNSSGDSLSSSGGK. Residues 642–653 are compositionally biased toward basic and acidic residues; sequence GSKRSEGQKGDD. Residues 654–673 show a composition bias toward low complexity; that stretch reads SFISSGGNSSGDSLSSSGGK.

It belongs to the TrbL/VirB6 family.

Its subcellular location is the cell membrane. This is an uncharacterized protein from Rickettsia bellii (strain RML369-C).